Reading from the N-terminus, the 309-residue chain is Pseudouridine-5'-phosphate glycosidase 2 (309 aa).

The Proton donor role is filled by glutamate 26. The substrate site is built by lysine 87 and valine 107. Aspartate 139 serves as a coordination point for Mn(2+). 141–143 (SAD) contributes to the substrate binding site. The active-site Nucleophile is lysine 160.

It belongs to the pseudouridine-5'-phosphate glycosidase family. Homotrimer. Mn(2+) is required as a cofactor.

It carries out the reaction D-ribose 5-phosphate + uracil = psi-UMP + H2O. Catalyzes the reversible cleavage of pseudouridine 5'-phosphate (PsiMP) to ribose 5-phosphate and uracil. Functions biologically in the cleavage direction, as part of a pseudouridine degradation pathway. This Rhizobium johnstonii (strain DSM 114642 / LMG 32736 / 3841) (Rhizobium leguminosarum bv. viciae) protein is Pseudouridine-5'-phosphate glycosidase 2.